The primary structure comprises 560 residues: Glucose-6-phosphate isomerase, cytosolic (560 aa).

Residue Ala-2 is modified to N-acetylalanine. Glu-361 (proton donor) is an active-site residue. Active-site residues include His-392 and Lys-517.

It belongs to the GPI family. In terms of assembly, homodimer.

Its subcellular location is the cytoplasm. It carries out the reaction alpha-D-glucose 6-phosphate = beta-D-fructose 6-phosphate. It participates in carbohydrate degradation; glycolysis; D-glyceraldehyde 3-phosphate and glycerone phosphate from D-glucose: step 2/4. Its activity is regulated as follows. Inhibited by glycerol-3-P (G3P). In Arabidopsis thaliana (Mouse-ear cress), this protein is Glucose-6-phosphate isomerase, cytosolic (PGIC).